Consider the following 592-residue polypeptide: Transmembrane 9 superfamily member 2 (592 aa).

Positions methionine 1–serine 24 are cleaved as a signal peptide. The Lumenal portion of the chain corresponds to aspartate 25–tryptophan 229. A helical membrane pass occupies residues phenylalanine 230–leucine 250. Topologically, residues methionine 251–glutamine 302 are cytoplasmic. The helical transmembrane segment at leucine 303–asparagine 323 threads the bilayer. Position 324 (arginine 324) is a topological domain, lumenal. A helical transmembrane segment spans residues glycine 325 to threonine 345. Topologically, residues serine 346–leucine 362 are cytoplasmic. The chain crosses the membrane as a helical span at residues leucine 363–valine 383. Topologically, residues alanine 384–threonine 397 are lumenal. A helical membrane pass occupies residues isoleucine 398–isoleucine 418. Topologically, residues alanine 419 to glutamine 452 are cytoplasmic. The helical transmembrane segment at methionine 453–alanine 473 threads the bilayer. Residues serine 474 to serine 485 lie on the Lumenal side of the membrane. Residues isoleucine 486–threonine 506 form a helical membrane-spanning segment. Topologically, residues tyrosine 507 to serine 521 are cytoplasmic. Residues phenylalanine 522–alanine 542 form a helical membrane-spanning segment. The Lumenal portion of the chain corresponds to arginine 543–serine 553. Residues phenylalanine 554 to glycine 574 form a helical membrane-spanning segment. At phenylalanine 575–glutamate 592 the chain is on the cytoplasmic side. The short motif at phenylalanine 581–tyrosine 586 is the Endoplasmic reticulum export signal element. Residues lysine 590 to glutamate 592 carry the Golgi retention signal motif.

This sequence belongs to the nonaspanin (TM9SF) (TC 9.A.2) family.

It is found in the endosome membrane. Its subcellular location is the golgi apparatus membrane. The polypeptide is Transmembrane 9 superfamily member 2 (Arabidopsis thaliana (Mouse-ear cress)).